Consider the following 287-residue polypeptide: Elongation factor Ts (287 aa).

Residues 81 to 84 (TDFV) are involved in Mg(2+) ion dislocation from EF-Tu.

The protein belongs to the EF-Ts family.

The protein resides in the cytoplasm. Its function is as follows. Associates with the EF-Tu.GDP complex and induces the exchange of GDP to GTP. It remains bound to the aminoacyl-tRNA.EF-Tu.GTP complex up to the GTP hydrolysis stage on the ribosome. This chain is Elongation factor Ts, found in Nitratidesulfovibrio vulgaris (strain ATCC 29579 / DSM 644 / CCUG 34227 / NCIMB 8303 / VKM B-1760 / Hildenborough) (Desulfovibrio vulgaris).